The following is a 521-amino-acid chain: Runt-related transcription factor 2 (521 aa).

2 disordered regions span residues 18–59 (FWDP…QQQQ) and 222–340 (DGPR…RRIS). Low complexity-rich tracts occupy residues 21 to 33 (PSTS…PSSS) and 47 to 59 (AAQQ…QQQQ). The region spanning 101-229 (TMVEIIADHP…TVDGPREPRR (129 aa)) is the Runt domain. Residue K238 forms a Glycyl lysine isopeptide (Lys-Gly) (interchain with G-Cter in SUMO2) linkage. A required for interaction with FOXO1 region spans residues 242 to 258 (FSDRLSDLGRIPHPSMR). At R267 the chain carries Asymmetric dimethylarginine. A compositionally biased stretch (polar residues) spans 267-326 (RPSLNSAPSPFNPQGQSQITDPRQAQSSPPWSYDQSYPSYLSQMTSPSIHSTTPLSSTRG). The interval 336–439 (PRRISDDDTA…SQSQSGPFQT (104 aa)) is interaction with KAT6A. Phosphoserine is present on S340. Residues 374 to 468 (RQFPSISSLT…VPGGDRSPSR (95 aa)) are interaction with KAT6B. S451 is subject to Phosphoserine; by CDK1. The disordered stretch occupies residues 460–521 (PGGDRSPSRM…RMDESVWRPY (62 aa)). Composition is skewed to polar residues over residues 473–492 (CTTT…NQND) and 499–511 (SHSS…NSSG). The segment covering 512 to 521 (RMDESVWRPY) has biased composition (basic and acidic residues).

In terms of assembly, heterodimer of an alpha and a beta subunit. The alpha subunit binds DNA as a monomer and through the Runt domain. DNA-binding is increased by heterodimerization. Interacts with XRCC6 (Ku70) and XRCC5 (Ku80). Interacts with HIVEP3. Interacts with IFI204. Interaction with SATB2; the interaction results in enhanced DNA binding and transactivation by these transcription factors. Binds to HIPK3. Interacts with FOXO1 (via a C-terminal region); the interaction inhibits RUNX2 transcriptional activity towards BGLAP. This interaction is prevented on insulin or IGF1 stimulation as FOXO1 is exported from the nucleus. Interacts with CCNB1, KAT6A and KAT6B. Interacts with FOXP3. Interacts with TMEM119. Interacts with OLFM2. Interacts with IPO7; the interaction inhibits RUNX2 nuclear translocation in osteoblasts. Interacts with DDX5. In terms of processing, phosphorylated; probably by MAP kinases (MAPK). Phosphorylation by HIPK3 is required for the SPEN/MINT and FGF2 transactivation during osteoblastic differentiation. Phosphorylation at Ser-451 by CDK1 promotes endothelial cell proliferation required for tumor angiogenesis probably by facilitating cell cycle progression. Isoform 3 is phosphorylated on Ser-340. Specifically expressed in osteoblasts.

Its subcellular location is the nucleus. It localises to the cytoplasm. Its function is as follows. Transcription factor involved in osteoblastic differentiation and skeletal morphogenesis. Essential for the maturation of osteoblasts and both intramembranous and endochondral ossification. CBF binds to the core site, 5'-PYGPYGGT-3', of a number of enhancers and promoters, including murine leukemia virus, polyomavirus enhancer, T-cell receptor enhancers, osteocalcin, osteopontin, bone sialoprotein, alpha 1(I) collagen, LCK, IL-3 and GM-CSF promoters. In osteoblasts, supports transcription activation: synergizes with SPEN/MINT to enhance FGFR2-mediated activation of the osteocalcin FGF-responsive element (OCFRE). Inhibits KAT6B-dependent transcriptional activation. The protein is Runt-related transcription factor 2 (RUNX2) of Homo sapiens (Human).